We begin with the raw amino-acid sequence, 289 residues long: Testis-expressed protein 26 (289 aa).

Residues Met1–Trp26 are disordered. Mn regions lie at residues Ala30–Gly42, Gln69–Lys83, Ile144–Ala157, Asp179–Pro193, and Gln233–Phe247.

The sequence is that of Testis-expressed protein 26 (TEX26) from Homo sapiens (Human).